The primary structure comprises 328 residues: Ribosomal protein L11 methyltransferase (328 aa).

4 residues coordinate S-adenosyl-L-methionine: Thr158, Gly180, Asp202, and Asn246.

It belongs to the methyltransferase superfamily. PrmA family.

It localises to the cytoplasm. The enzyme catalyses L-lysyl-[protein] + 3 S-adenosyl-L-methionine = N(6),N(6),N(6)-trimethyl-L-lysyl-[protein] + 3 S-adenosyl-L-homocysteine + 3 H(+). In terms of biological role, methylates ribosomal protein L11. The protein is Ribosomal protein L11 methyltransferase of Polynucleobacter necessarius subsp. necessarius (strain STIR1).